The sequence spans 201 residues: Putative tRNA-binding protein YtpR (201 aa).

The region spanning 90 to 200 (VDLSPKFVVG…GDYEAGDAFQ (111 aa)) is the tRNA-binding domain.

This chain is Putative tRNA-binding protein YtpR (ytpR), found in Bacillus subtilis (strain 168).